A 600-amino-acid chain; its full sequence is Aspartate--tRNA(Asp/Asn) ligase (600 aa).

Glutamate 174 serves as a coordination point for L-aspartate. Residues 198 to 201 are aspartate; it reads QLFK. An L-aspartate-binding site is contributed by arginine 220. Residues 220 to 222 and glutamine 229 contribute to the ATP site; that span reads RDE. Histidine 457 is an L-aspartate binding site. Position 491 (glutamate 491) interacts with ATP. L-aspartate is bound at residue arginine 498. Position 543–546 (543–546) interacts with ATP; sequence GLDR.

It belongs to the class-II aminoacyl-tRNA synthetase family. Type 1 subfamily. As to quaternary structure, homodimer.

It localises to the cytoplasm. The enzyme catalyses tRNA(Asx) + L-aspartate + ATP = L-aspartyl-tRNA(Asx) + AMP + diphosphate. In terms of biological role, aspartyl-tRNA synthetase with relaxed tRNA specificity since it is able to aspartylate not only its cognate tRNA(Asp) but also tRNA(Asn). Reaction proceeds in two steps: L-aspartate is first activated by ATP to form Asp-AMP and then transferred to the acceptor end of tRNA(Asp/Asn). This chain is Aspartate--tRNA(Asp/Asn) ligase, found in Burkholderia orbicola (strain AU 1054).